The primary structure comprises 404 residues: Argininosuccinate synthase (404 aa).

ATP is bound by residues 12–20 (AYSGGLDTS) and A39. Residues Y90 and S95 each coordinate L-citrulline. G120 lines the ATP pocket. L-aspartate is bound by residues T122, N126, and D127. Residue N126 coordinates L-citrulline. L-citrulline contacts are provided by R130, S181, S190, E266, and Y278.

Belongs to the argininosuccinate synthase family. Type 1 subfamily. Homotetramer.

The protein resides in the cytoplasm. It carries out the reaction L-citrulline + L-aspartate + ATP = 2-(N(omega)-L-arginino)succinate + AMP + diphosphate + H(+). It functions in the pathway amino-acid biosynthesis; L-arginine biosynthesis; L-arginine from L-ornithine and carbamoyl phosphate: step 2/3. This chain is Argininosuccinate synthase, found in Rhodospirillum rubrum (strain ATCC 11170 / ATH 1.1.1 / DSM 467 / LMG 4362 / NCIMB 8255 / S1).